We begin with the raw amino-acid sequence, 189 residues long: MSAIVPEIRSADLLRYTVIGSRRPSVYFWAVALTGGGLGFTLAGLSSYLHRNLLPFSDPASLVFIPQGIAMLFYGVLGSLAGLYQWLSLYWNLGGGYNEFDRRTQKITLVRQGFPGKNREVRLEYDFADVQSLRVELREGLNPRRAIYLRVKGRGDIPLTGVGQPPPLTEIENQAAEIARFLNVSLEGI.

The next 2 helical transmembrane spans lie at serine 25 to leucine 45 and leucine 62 to glycine 82.

It belongs to the Ycf4 family.

It is found in the cellular thylakoid membrane. Seems to be required for the assembly of the photosystem I complex. The protein is Photosystem I assembly protein Ycf4 of Synechococcus sp. (strain JA-2-3B'a(2-13)) (Cyanobacteria bacterium Yellowstone B-Prime).